A 239-amino-acid polypeptide reads, in one-letter code: Splicing factor U2AF 35 kDa subunit (239 aa).

Ala-2 bears the N-acetylalanine mark. The C3H1-type 1 zinc finger occupies 12-40 (EKDKVNCSFYFKIGACRHGDRCSRLHNKP). Lys-39 carries the N6-methyllysine modification. Phosphoserine is present on residues Ser-61 and Ser-145. In terms of domain architecture, RRM spans 65–147 (LRCAVSDVEM…QPIHAELSPV (83 aa)). The segment at 149 to 176 (DFREACCRQYEMGECTRGGFCNFMHLKP) adopts a C3H1-type 2 zinc-finger fold. Arg-165 is subject to Omega-N-methylarginine. The interval 183–239 (RELYGRRRKKHRSRSRSRERRSRSRDRGRGGGGGGGGGGGRERDRRRSRDRERSGRF) is disordered. The span at 188–208 (RRRKKHRSRSRSRERRSRSRD) shows a compositional bias: basic residues. Positions 212–221 (GGGGGGGGGG) are enriched in gly residues. Over residues 222–239 (GRERDRRRSRDRERSGRF) the composition is skewed to basic and acidic residues.

Belongs to the splicing factor SR family. Identified in the spliceosome C complex. Heterodimer with U2AF2. Interacts (via RS domain) with PHF5A (via N-terminus). Interacts with ZRANB2. Interacts with SDE2. Interacts with SF3B1. Expressed in primary spermatocytes and elongating spermatids (at protein level).

Its subcellular location is the nucleus. It is found in the nucleus speckle. Its function is as follows. Plays a critical role in both constitutive and enhancer-dependent splicing by mediating protein-protein interactions and protein-RNA interactions required for accurate 3'-splice site selection. Recruits U2 snRNP to the branch point. Directly mediates interactions between U2AF2 and proteins bound to the enhancers and thus may function as a bridge between U2AF2 and the enhancer complex to recruit it to the adjacent intron. The chain is Splicing factor U2AF 35 kDa subunit (U2af1) from Mus musculus (Mouse).